A 139-amino-acid polypeptide reads, in one-letter code: MAIERTLSILKPDTVKNNIIGNINSYIEKSGLRIIAQKMMLLTKKQAELFYAIHKDRPFFGGLVEFMTSGPVIVQVLVGENAISKYRQIMGATDPKQADKGTIRGDFADDVNENRVHGSDSLENAHKEIAFFFAECELV.

ATP-binding residues include lysine 11, phenylalanine 59, arginine 87, threonine 93, arginine 104, and asparagine 114. Histidine 117 acts as the Pros-phosphohistidine intermediate in catalysis.

The protein belongs to the NDK family. As to quaternary structure, homotetramer. Mg(2+) serves as cofactor.

Its subcellular location is the cytoplasm. The enzyme catalyses a 2'-deoxyribonucleoside 5'-diphosphate + ATP = a 2'-deoxyribonucleoside 5'-triphosphate + ADP. It catalyses the reaction a ribonucleoside 5'-diphosphate + ATP = a ribonucleoside 5'-triphosphate + ADP. Functionally, major role in the synthesis of nucleoside triphosphates other than ATP. The ATP gamma phosphate is transferred to the NDP beta phosphate via a ping-pong mechanism, using a phosphorylated active-site intermediate. This is Nucleoside diphosphate kinase from Wolbachia sp. subsp. Brugia malayi (strain TRS).